Consider the following 603-residue polypeptide: Proline--tRNA ligase (603 aa).

The protein belongs to the class-II aminoacyl-tRNA synthetase family. ProS type 1 subfamily. As to quaternary structure, homodimer.

It is found in the cytoplasm. It carries out the reaction tRNA(Pro) + L-proline + ATP = L-prolyl-tRNA(Pro) + AMP + diphosphate. Functionally, catalyzes the attachment of proline to tRNA(Pro) in a two-step reaction: proline is first activated by ATP to form Pro-AMP and then transferred to the acceptor end of tRNA(Pro). As ProRS can inadvertently accommodate and process non-cognate amino acids such as alanine and cysteine, to avoid such errors it has two additional distinct editing activities against alanine. One activity is designated as 'pretransfer' editing and involves the tRNA(Pro)-independent hydrolysis of activated Ala-AMP. The other activity is designated 'posttransfer' editing and involves deacylation of mischarged Ala-tRNA(Pro). The misacylated Cys-tRNA(Pro) is not edited by ProRS. This Microcystis aeruginosa (strain NIES-843 / IAM M-2473) protein is Proline--tRNA ligase.